A 299-amino-acid polypeptide reads, in one-letter code: Protease HtpX homolog (299 aa).

Transmembrane regions (helical) follow at residues 15–35 (ILLLVFFLLLALVGYAVGYLF) and 39–59 (GLGGLVIALIIGFIYALSMIF). A Zn(2+)-binding site is contributed by H143. E144 is a catalytic residue. Residue H147 coordinates Zn(2+). The next 2 membrane-spanning stretches (helical) occupy residues 158 to 178 (IAVALVSAITMLSGMAGRMMW) and 198 to 218 (IIMLVVSLLAIVLAPLAATLV). E227 contacts Zn(2+).

Belongs to the peptidase M48B family. The cofactor is Zn(2+).

It localises to the cell membrane. In Streptococcus pneumoniae (strain Hungary19A-6), this protein is Protease HtpX homolog.